Reading from the N-terminus, the 728-residue chain is Catalase-peroxidase (728 aa).

The tryptophyl-tyrosyl-methioninium (Trp-Tyr) (with M-244) cross-link spans 91-218; it reads WHSAGTYRTA…LAAVQMGLIY (128 aa). Residue histidine 92 is the Proton acceptor of the active site. Residues 218–244 constitute a cross-link (tryptophyl-tyrosyl-methioninium (Tyr-Met) (with W-91)); the sequence is YVNPEGPDGNPDPVAAARDIRDTFARM. Position 259 (histidine 259) interacts with heme b.

It belongs to the peroxidase family. Peroxidase/catalase subfamily. As to quaternary structure, homodimer or homotetramer. Heme b serves as cofactor. In terms of processing, formation of the three residue Trp-Tyr-Met cross-link is important for the catalase, but not the peroxidase activity of the enzyme.

The enzyme catalyses H2O2 + AH2 = A + 2 H2O. It carries out the reaction 2 H2O2 = O2 + 2 H2O. Functionally, bifunctional enzyme with both catalase and broad-spectrum peroxidase activity. The chain is Catalase-peroxidase from Burkholderia pseudomallei (strain 1710b).